The following is a 405-amino-acid chain: Exodeoxyribonuclease 7 large subunit (405 aa).

It belongs to the XseA family. Heterooligomer composed of large and small subunits.

The protein localises to the cytoplasm. The catalysed reaction is Exonucleolytic cleavage in either 5'- to 3'- or 3'- to 5'-direction to yield nucleoside 5'-phosphates.. Bidirectionally degrades single-stranded DNA into large acid-insoluble oligonucleotides, which are then degraded further into small acid-soluble oligonucleotides. The protein is Exodeoxyribonuclease 7 large subunit of Halothermothrix orenii (strain H 168 / OCM 544 / DSM 9562).